Reading from the N-terminus, the 395-residue chain is S-adenosylmethionine synthase (395 aa).

Position 19 (histidine 19) interacts with ATP. Residue aspartate 21 coordinates Mg(2+). Glutamate 47 contacts K(+). L-methionine-binding residues include glutamate 60 and glutamine 103. The flexible loop stretch occupies residues 103-113; it reads QSPDIAQGVNS. ATP contacts are provided by residues 170–172, 236–237, aspartate 245, 251–252, alanine 268, and lysine 272; these read DNK, KF, and RK. Aspartate 245 is a binding site for L-methionine. Position 276 (lysine 276) interacts with L-methionine.

This sequence belongs to the AdoMet synthase family. Homotetramer; dimer of dimers. Mg(2+) is required as a cofactor. The cofactor is K(+).

It is found in the cytoplasm. The enzyme catalyses L-methionine + ATP + H2O = S-adenosyl-L-methionine + phosphate + diphosphate. Its pathway is amino-acid biosynthesis; S-adenosyl-L-methionine biosynthesis; S-adenosyl-L-methionine from L-methionine: step 1/1. Its function is as follows. Catalyzes the formation of S-adenosylmethionine (AdoMet) from methionine and ATP. The overall synthetic reaction is composed of two sequential steps, AdoMet formation and the subsequent tripolyphosphate hydrolysis which occurs prior to release of AdoMet from the enzyme. In Rhodopirellula baltica (strain DSM 10527 / NCIMB 13988 / SH1), this protein is S-adenosylmethionine synthase.